We begin with the raw amino-acid sequence, 129 residues long: Small ribosomal subunit protein uS11 (129 aa).

The protein belongs to the universal ribosomal protein uS11 family. Part of the 30S ribosomal subunit. Interacts with proteins S7 and S18. Binds to IF-3.

Located on the platform of the 30S subunit, it bridges several disparate RNA helices of the 16S rRNA. Forms part of the Shine-Dalgarno cleft in the 70S ribosome. The polypeptide is Small ribosomal subunit protein uS11 (Vibrio campbellii (strain ATCC BAA-1116)).